Here is a 426-residue protein sequence, read N- to C-terminus: Synaptotagmin-13 (426 aa).

The Vesicular segment spans residues 1–6 (MVLSVP). A helical membrane pass occupies residues 7 to 29 (VIALGATLGTATSILALCGVTCL). The Cytoplasmic segment spans residues 30–426 (CRHMHPKKGL…QIAMWHQLHL (397 aa)). C2 domains lie at 158 to 275 (QAPK…AQWG) and 287 to 422 (GTGE…AMWH).

It belongs to the synaptotagmin family. In terms of assembly, interacts with NRXN1. In terms of tissue distribution, expressed in brain, spleen, kidney and testis.

The protein localises to the membrane. Its function is as follows. May be involved in transport vesicle docking to the plasma membrane. This chain is Synaptotagmin-13 (Syt13), found in Rattus norvegicus (Rat).